Here is a 132-residue protein sequence, read N- to C-terminus: Small ribosomal subunit protein uS8 (132 aa).

Belongs to the universal ribosomal protein uS8 family. In terms of assembly, part of the 30S ribosomal subunit. Contacts proteins S5 and S12.

In terms of biological role, one of the primary rRNA binding proteins, it binds directly to 16S rRNA central domain where it helps coordinate assembly of the platform of the 30S subunit. This is Small ribosomal subunit protein uS8 from Streptococcus mutans serotype c (strain ATCC 700610 / UA159).